A 352-amino-acid chain; its full sequence is A-type ATP synthase subunit C (352 aa).

Belongs to the V-ATPase V0D/AC39 subunit family. In terms of assembly, has multiple subunits with at least A(3), B(3), C, D, E, F, H, I and proteolipid K(x).

It is found in the cell membrane. In terms of biological role, component of the A-type ATP synthase that produces ATP from ADP in the presence of a proton gradient across the membrane. This chain is A-type ATP synthase subunit C, found in Halobacterium salinarum (strain ATCC 29341 / DSM 671 / R1).